Here is a 526-residue protein sequence, read N- to C-terminus: ATP synthase subunit alpha (526 aa).

171 to 178 contributes to the ATP binding site; the sequence is GDRQTGKT.

It belongs to the ATPase alpha/beta chains family. In terms of assembly, F-type ATPases have 2 components, CF(1) - the catalytic core - and CF(0) - the membrane proton channel. CF(1) has five subunits: alpha(3), beta(3), gamma(1), delta(1), epsilon(1). CF(0) has four main subunits: a(1), b(1), b'(1) and c(9-12).

It localises to the cell inner membrane. It carries out the reaction ATP + H2O + 4 H(+)(in) = ADP + phosphate + 5 H(+)(out). Functionally, produces ATP from ADP in the presence of a proton gradient across the membrane. The alpha chain is a regulatory subunit. This Chlorobaculum tepidum (strain ATCC 49652 / DSM 12025 / NBRC 103806 / TLS) (Chlorobium tepidum) protein is ATP synthase subunit alpha.